The chain runs to 864 residues: DNA mismatch repair protein MutS (864 aa).

Gly623–Ser630 is a binding site for ATP.

It belongs to the DNA mismatch repair MutS family.

Functionally, this protein is involved in the repair of mismatches in DNA. It is possible that it carries out the mismatch recognition step. This protein has a weak ATPase activity. This is DNA mismatch repair protein MutS from Polaromonas sp. (strain JS666 / ATCC BAA-500).